The primary structure comprises 100 residues: Integration host factor subunit alpha (100 aa).

The interval 53–73 is disordered; the sequence is FDLRDKRQRPGRNPKTGEEIP.

This sequence belongs to the bacterial histone-like protein family. In terms of assembly, heterodimer of an alpha and a beta chain.

This protein is one of the two subunits of integration host factor, a specific DNA-binding protein that functions in genetic recombination as well as in transcriptional and translational control. The polypeptide is Integration host factor subunit alpha (Pseudomonas aeruginosa (strain LESB58)).